The sequence spans 224 residues: Magnesium-protoporphyrin O-methyltransferase (224 aa).

Belongs to the class I-like SAM-binding methyltransferase superfamily. Magnesium protoporphyrin O-methyltransferase family.

The catalysed reaction is Mg-protoporphyrin IX + S-adenosyl-L-methionine = Mg-protoporphyrin IX 13-monomethyl ester + S-adenosyl-L-homocysteine. It participates in porphyrin-containing compound metabolism; bacteriochlorophyll biosynthesis (light-independent). Functionally, converts Mg-protoporphyrin IX to Mg-protoporphyrin IX methylester using S-adenosyl-L-methionine as a cofactor. This Rhodobacter capsulatus (Rhodopseudomonas capsulata) protein is Magnesium-protoporphyrin O-methyltransferase (bchM).